We begin with the raw amino-acid sequence, 294 residues long: Mating type protein mtA-1 (294 aa).

A DNA-binding region (alpha box) is located at residues 46-101 (TAKKKVNGFMGFRSNYSPLFSYLPQKMRSPFMTILWQYDPYHNEWDFMCSVYSSIR).

It belongs to the MATALPHA1 family.

The protein resides in the nucleus. In terms of biological role, mating type proteins are sequence specific DNA-binding proteins that act as master switches in fungal differentiation by controlling gene expression in a cell type-specific fashion. Transcriptional activator that induces the transcription of alpha-specific genes. The protein is Mating type protein mtA-1 (MTA1) of Sordaria equina.